A 289-amino-acid polypeptide reads, in one-letter code: Glycine--tRNA ligase alpha subunit (289 aa).

It belongs to the class-II aminoacyl-tRNA synthetase family. In terms of assembly, tetramer of two alpha and two beta subunits.

The protein resides in the cytoplasm. The catalysed reaction is tRNA(Gly) + glycine + ATP = glycyl-tRNA(Gly) + AMP + diphosphate. The polypeptide is Glycine--tRNA ligase alpha subunit (Prochlorococcus marinus (strain MIT 9515)).